The following is a 344-amino-acid chain: Heat-inducible transcription repressor HrcA (344 aa).

It belongs to the HrcA family.

Its function is as follows. Negative regulator of class I heat shock genes (grpE-dnaK-dnaJ and groELS operons). Prevents heat-shock induction of these operons. The sequence is that of Heat-inducible transcription repressor HrcA from Streptococcus agalactiae serotype III (strain NEM316).